Consider the following 332-residue polypeptide: Abl interactor homolog (332 aa).

Residues 73–104 (HITSLLQLQTNEMEKLNIEIQTLTQRVRMIHD) are a coiled coil. The segment at 152–332 (SDINQNGVPP…NDFPPPPPPM (181 aa)) is disordered. The span at 164–206 (NHSNSSANLTSSSGHLAASSTSNSSTPSYQSPSYSSQPTISSG) shows a compositional bias: low complexity. The segment covering 221 to 247 (APPPPSLSVPAAPPPPVMNVPPPPPTS) has biased composition (pro residues). Residues 248–257 (QRPSSVNNNA) are compositionally biased toward polar residues. The segment covering 277 to 314 (LPPPPSFGLPPPPTLGDDFPPPPPPPVGSYDFPPPPAR) has biased composition (pro residues).

This sequence belongs to the ABI family. Part of a Scar/WAVE complex containing brk1, scrA, abiA, pirA and napA. Interacts with scrA.

Its function is as follows. Involved in regulation of actin and microtubule organization. Required for proper cytokinesis. This Dictyostelium discoideum (Social amoeba) protein is Abl interactor homolog (abiA).